The primary structure comprises 234 residues: MAKLTKRMRNIREKVEVTKEYDINEAVALLKELATAKFTESVDVAVNLGIDARKSDQNVRGATVLPHGTGREIRVAVFTQGANAEAAKEAGADLVGMEDLAELVKKGEMNFDVVVASPDAMRVVGQLGTILGPRGLMPNPKVGTVTPNVAEAVKNAKAGQVRYRNDKNGIIHTTIGKVDFDAAQLKENLEALLVALKKAKPTSAKGTFVKKVSISTTMGAGVSLDQATLNTQTN.

It belongs to the universal ribosomal protein uL1 family. In terms of assembly, part of the 50S ribosomal subunit.

In terms of biological role, binds directly to 23S rRNA. The L1 stalk is quite mobile in the ribosome, and is involved in E site tRNA release. Its function is as follows. Protein L1 is also a translational repressor protein, it controls the translation of the L11 operon by binding to its mRNA. This is Large ribosomal subunit protein uL1 from Aliivibrio fischeri (strain ATCC 700601 / ES114) (Vibrio fischeri).